We begin with the raw amino-acid sequence, 1070 residues long: DNA-directed RNA polymerase subunit beta (1070 aa).

The protein belongs to the RNA polymerase beta chain family. As to quaternary structure, in plastids the minimal PEP RNA polymerase catalytic core is composed of four subunits: alpha, beta, beta', and beta''. When a (nuclear-encoded) sigma factor is associated with the core the holoenzyme is formed, which can initiate transcription.

The protein resides in the plastid. It localises to the chloroplast. The catalysed reaction is RNA(n) + a ribonucleoside 5'-triphosphate = RNA(n+1) + diphosphate. DNA-dependent RNA polymerase catalyzes the transcription of DNA into RNA using the four ribonucleoside triphosphates as substrates. The chain is DNA-directed RNA polymerase subunit beta from Populus alba (White poplar).